We begin with the raw amino-acid sequence, 434 residues long: Glutamyl-tRNA reductase (434 aa).

Substrate is bound by residues 57 to 60 (TCNR), Ser-116, 121 to 123 (ETQ), and Gln-127. Cys-58 serves as the catalytic Nucleophile. Residue 196 to 201 (GAGEMI) participates in NADP(+) binding.

The protein belongs to the glutamyl-tRNA reductase family. Homodimer.

The catalysed reaction is (S)-4-amino-5-oxopentanoate + tRNA(Glu) + NADP(+) = L-glutamyl-tRNA(Glu) + NADPH + H(+). The protein operates within porphyrin-containing compound metabolism; protoporphyrin-IX biosynthesis; 5-aminolevulinate from L-glutamyl-tRNA(Glu): step 1/2. Its function is as follows. Catalyzes the NADPH-dependent reduction of glutamyl-tRNA(Glu) to glutamate 1-semialdehyde (GSA). The polypeptide is Glutamyl-tRNA reductase (Burkholderia pseudomallei (strain 1106a)).